The following is a 712-amino-acid chain: Protein TAPT1 homolog (712 aa).

Over residues 1-21 the composition is skewed to low complexity; it reads MNNVPSTSRENSRNPSESSSS. 2 disordered regions span residues 1–22 and 44–66; these read MNNV…SSSI and ITMS…EIET. 7 consecutive transmembrane segments (helical) span residues 196 to 216, 222 to 242, 305 to 325, 379 to 399, 402 to 422, 470 to 490, and 497 to 517; these read FFYL…GALL, TSAE…SMLI, TCGH…LVIL, HIFA…NWNI, FTEM…VDWL, GFIP…TFTL, and IIFG…GVVM. Basic and acidic residues predominate over residues 596–619; that stretch reads EIRRSTDRETAVSHLTARSDERTP. The interval 596 to 712 is disordered; sequence EIRRSTDRET…MPEQGVQRIE (117 aa). Residues 656 to 667 are compositionally biased toward polar residues; sequence TENNTNSNSEQA. Positions 675-692 are enriched in low complexity; that stretch reads TAAPVTSSASTNTNATSS.

It belongs to the TAPT1 family.

Its subcellular location is the membrane. The sequence is that of Protein TAPT1 homolog from Caenorhabditis elegans.